A 777-amino-acid polypeptide reads, in one-letter code: Androgen receptor (777 aa).

Residues 1–416 (MEVHIGLGGV…IDYYFPPQKP (416 aa)) form a modulating region. 3 disordered regions span residues 53–95 (CVHP…QAPQ), 110–132 (GEQG…YPES), and 205–241 (RRAG…LSEP). 2 consecutive NR C4-type zinc fingers follow at residues 417 to 434 (CLSC…ALTC) and 453 to 472 (CASR…CPSC). Residues 417 to 489 (CLSCEDEASG…AGMTLGARKL (73 aa)) constitute a DNA-binding region (nuclear receptor). The NR LBD domain occupies 526–757 (SCQPIFLNVL…DFPEMMSEII (232 aa)). Positions 563, 610, and 735 each coordinate 17beta-hydroxy-5alpha-androstan-3-one.

Belongs to the nuclear hormone receptor family. NR3 subfamily. Binds DNA as a homodimer. Interacts via the ligand-binding domain with LXXLL and FXXLF motifs from coactivator proteins. Interacts (via ligand-binding domain) with TRIM68. Detected in somatic Leydig and Sertoli cells in testis with high level expression. Also detected at lower expression levels in forebrain and heart.

Its subcellular location is the nucleus. The protein resides in the cytoplasm. Functionally, steroid hormone receptors are ligand-activated transcription factors that regulate eukaryotic gene expression and affect cellular proliferation and differentiation in target tissues. Transcription factor activity is modulated by bound coactivator and corepressor proteins. This Aquarana catesbeiana (American bullfrog) protein is Androgen receptor (ar).